A 689-amino-acid chain; its full sequence is Solute carrier family 22 member 23 (689 aa).

2 disordered regions span residues 1-55 and 162-188; these read MAID…PLPA and TASW…GKGN. Asn24 carries an N-linked (GlcNAc...) asparagine glycan. A compositionally biased stretch (polar residues) spans 165–177; it reads WGTTSNRSNSSDT. 2 consecutive transmembrane segments (helical) span residues 229 to 249 and 253 to 273; these read FSLL…ADWV and PVLL…ALSV. A glycan (N-linked (GlcNAc...) asparagine) is linked at Asn274. Transmembrane regions (helical) follow at residues 283-303, 310-330, 339-359, 462-482, 489-509, 541-561, 572-592, and 601-621; these read FFEG…RIEL, FIIT…MPGL, VLQA…SIFP, ADYY…CLVV, GGLL…LGLL, IAFS…SVFF, CGGL…APII, and FLHH…ILLL.

This sequence belongs to the major facilitator (TC 2.A.1) superfamily. Organic cation transporter (TC 2.A.1.19) family. In terms of tissue distribution, expressed in many tissues, including brain, spinal cord, kidney, liver, eye, adipose tissue, lung, epididymis, adrenal gland, pineal gland, skeletal muscle, heart, spleen, thymus, ovary, uterus, testis and epididymis.

It is found in the membrane. This Rattus norvegicus (Rat) protein is Solute carrier family 22 member 23 (Slc22a23).